A 478-amino-acid polypeptide reads, in one-letter code: Phosphoglycerate kinase 2, chloroplastic (478 aa).

The transit peptide at 1–74 (MASTAATAAL…GKGARGVITM (74 aa)) directs the protein to the chloroplast. Phosphoserine is present on S78. The (2R)-3-phosphoglycerate site is built by A96, D97, N99, R113, T135, H136, G138, R139, R194, H226, and R227. ADP is bound at residue G272. G272 contributes to the CDP binding site. The AMP site is built by K274 and K278. An ATP-binding site is contributed by K278. G296 is a binding site for ADP. A CDP-binding site is contributed by G296. G297 and G369 together coordinate AMP. ATP contacts are provided by G297 and G369. Residues G394 and F399 each contribute to the CDP site. F399 is a binding site for ADP. E400 lines the AMP pocket. ATP-binding residues include E400, D431, and S432. D431 serves as a coordination point for Mg(2+).

The protein belongs to the phosphoglycerate kinase family. In terms of assembly, monomer. Mg(2+) serves as cofactor.

It localises to the plastid. It is found in the chloroplast. It catalyses the reaction (2R)-3-phosphoglycerate + ATP = (2R)-3-phospho-glyceroyl phosphate + ADP. Its pathway is carbohydrate biosynthesis; Calvin cycle. The polypeptide is Phosphoglycerate kinase 2, chloroplastic (Arabidopsis thaliana (Mouse-ear cress)).